Reading from the N-terminus, the 473-residue chain is Photosystem II CP43 reaction center protein (473 aa).

The propeptide occupies 1-14 (MKTLYSLRRFYPVE). Threonine 15 bears the N-acetylthreonine mark. Threonine 15 carries the phosphothreonine modification. 5 consecutive transmembrane segments (helical) span residues 69–93 (LFEVAHFVPEKPMYEQGLILLPHLA), 134–155 (LLGPETLEESFPFFGYVWKDRN), 178–200 (KALYFGGVYDTWAPGGGDVRKIT), 255–275 (KPFAWARRAFVWSGEAYLSYS), and 291–312 (WFNNTAYPSEFYGPTGPEASQA). Glutamate 367 is a [CaMn4O5] cluster binding site. A helical membrane pass occupies residues 447–471 (RARAAAAGFEKGIDRDLEPVLSMTP).

This sequence belongs to the PsbB/PsbC family. PsbC subfamily. In terms of assembly, PSII is composed of 1 copy each of membrane proteins PsbA, PsbB, PsbC, PsbD, PsbE, PsbF, PsbH, PsbI, PsbJ, PsbK, PsbL, PsbM, PsbT, PsbX, PsbY, PsbZ, Psb30/Ycf12, at least 3 peripheral proteins of the oxygen-evolving complex and a large number of cofactors. It forms dimeric complexes. Binds multiple chlorophylls and provides some of the ligands for the Ca-4Mn-5O cluster of the oxygen-evolving complex. It may also provide a ligand for a Cl- that is required for oxygen evolution. PSII binds additional chlorophylls, carotenoids and specific lipids. serves as cofactor.

It is found in the plastid. It localises to the chloroplast thylakoid membrane. Its function is as follows. One of the components of the core complex of photosystem II (PSII). It binds chlorophyll and helps catalyze the primary light-induced photochemical processes of PSII. PSII is a light-driven water:plastoquinone oxidoreductase, using light energy to abstract electrons from H(2)O, generating O(2) and a proton gradient subsequently used for ATP formation. In Phalaenopsis aphrodite subsp. formosana (Moth orchid), this protein is Photosystem II CP43 reaction center protein.